Here is an 875-residue protein sequence, read N- to C-terminus: MTDIDVRLREDVHVLGELLGETIRQQHGDAFLQKIEDIRHSAKADRRGPGEQLSSTLADLAEEDLLPVARAFNQFLNLANMAEQYQLIRRRDADQPEPFEAQVLPELLGRLKQAGHSNDALARQLAKLDIQLVLTAHPTEVARRTLIQKYDAIAGQLAAQDHRDLTPAERQQVRERLRRLIAEAWHTEEIRRTRPTPVDEAKWGFAVIEHSLWHAIPSHLRKVDKALLEATGLRLPLEAAPIRFASWMGGDRDGNPNVTAAVTREVLLLARWMAADLFLRDIDALAAELSMQQANDTLRKQVGDSAEPYRAVLKQLRDRLRATRAWAHSALTSNQPAGADVLVDNRELIAPLELCYQSLHECGMGVIAEGPLLDCLRRAVTFGLFLGRLDVRQDAARHRDALTEITDYLGLGRYADWDEEQRIAFLQAELKNRRPLLPAHFKPQADTAEVLATCREVAAAPAASLGSYVISMAGAASDVLAVQLLLKEAGLTRPMRVVPLFETLADLDNAGPVMQRLLGLPGYRAGLRGPQEVMIGYSDSAKDAGTTAAAWAQYRAQENLVRICAEHQVELLLFHGRGGTVGRGGGPAHAAILSQPPGSVAGRFRTTEQGEMIRFKFGLPGIAEQNLNLYLAAVLEATLLPPPPPQPAWREVMDQLAADGVQAYRSVVRENPDFVEYFRQSTPEQELGRLPLGSRPAKRRAGGIESLRAIPWIFGWTQTRLMLPAWLGWETALTNALARGQGELLAQMREQWPFFRTRIDMLEMVLAKADAQIAEAYDERLVQPHLRPLGAHLRDLLSQSCQVVLGLTGQPVLLAHSPETLEFISLRNTYLDPLHRLQAELLARSRSREAALDSPLEQALLVTVAGIAAGLRNTG.

Active-site residues include H137 and K542.

Belongs to the PEPCase type 1 family. It depends on Mg(2+) as a cofactor.

The enzyme catalyses oxaloacetate + phosphate = phosphoenolpyruvate + hydrogencarbonate. In terms of biological role, forms oxaloacetate, a four-carbon dicarboxylic acid source for the tricarboxylic acid cycle. This Pseudomonas putida (strain ATCC 47054 / DSM 6125 / CFBP 8728 / NCIMB 11950 / KT2440) protein is Phosphoenolpyruvate carboxylase.